The following is a 1404-amino-acid chain: DNA-directed RNA polymerase subunit beta' (1404 aa).

Zn(2+) contacts are provided by Cys70, Cys72, Cys85, and Cys88. Asp460, Asp462, and Asp464 together coordinate Mg(2+). 4 residues coordinate Zn(2+): Cys814, Cys889, Cys896, and Cys899. Positions 1377 to 1404 (DSEMETLSGKPAAAEPVAAVADAGADEE) are disordered. The span at 1387–1404 (PAAAEPVAAVADAGADEE) shows a compositional bias: low complexity.

It belongs to the RNA polymerase beta' chain family. In terms of assembly, the RNAP catalytic core consists of 2 alpha, 1 beta, 1 beta' and 1 omega subunit. When a sigma factor is associated with the core the holoenzyme is formed, which can initiate transcription. Requires Mg(2+) as cofactor. Zn(2+) is required as a cofactor.

It carries out the reaction RNA(n) + a ribonucleoside 5'-triphosphate = RNA(n+1) + diphosphate. Functionally, DNA-dependent RNA polymerase catalyzes the transcription of DNA into RNA using the four ribonucleoside triphosphates as substrates. In Xanthomonas euvesicatoria pv. vesicatoria (strain 85-10) (Xanthomonas campestris pv. vesicatoria), this protein is DNA-directed RNA polymerase subunit beta'.